The following is a 919-amino-acid chain: Alanine--tRNA ligase (919 aa).

Positions 565, 569, 667, and 671 each coordinate Zn(2+).

It belongs to the class-II aminoacyl-tRNA synthetase family. It depends on Zn(2+) as a cofactor.

The protein resides in the cytoplasm. The enzyme catalyses tRNA(Ala) + L-alanine + ATP = L-alanyl-tRNA(Ala) + AMP + diphosphate. Catalyzes the attachment of alanine to tRNA(Ala) in a two-step reaction: alanine is first activated by ATP to form Ala-AMP and then transferred to the acceptor end of tRNA(Ala). Also edits incorrectly charged Ser-tRNA(Ala) and Gly-tRNA(Ala) via its editing domain. The chain is Alanine--tRNA ligase from Leptospira biflexa serovar Patoc (strain Patoc 1 / Ames).